The chain runs to 564 residues: Dicarboxylate transporter 2, chloroplastic (564 aa).

A chloroplast-targeting transit peptide spans 1–22 (MESLALLPTLSLSTTTTTSKAT). A disordered region spans residues 35–58 (RRPHLSLSLSSTPKPTLTFSSHSH). Positions 39-58 (LSLSLSSTPKPTLTFSSHSH) are enriched in low complexity. Helical transmembrane passes span 94–114 (GAKL…RFAV), 127–147 (LLAI…PVGA), 166–186 (TAFC…FFFA), 235–255 (AGGI…SLPG), 262–282 (LGTY…ALFL), 307–327 (VFWL…TPLI), 356–376 (VTKN…LWVF), 380–400 (IGVS…LLGV), 415–435 (TLAW…LGIV), 451–471 (LSWP…HYLF), 484–504 (AFLA…LALA), and 538–558 (MGFI…GVWW).

This sequence belongs to the SLC13A/DASS transporter (TC 2.A.47) family. DIT1 subfamily. Expressed in leaves.

It localises to the plastid. The protein localises to the chloroplast inner membrane. In terms of biological role, glutamate/malate translocator involved with DIT1 in primary ammonia assimilation and in the re-assimilation of ammonia generated by the photorespiratory pathway. Exports the end product of ammonia assimilation, glutamate, from plastids to the cytosol. The precursor for ammonia assimilation, 2-oxoglutarate, is imported from the cytosol by DIT1. In Spinacia oleracea (Spinach), this protein is Dicarboxylate transporter 2, chloroplastic (DIT2).